The following is a 407-amino-acid chain: Glucan 1,3-beta-glucosidase 1 (407 aa).

A signal peptide spans 1 to 22 (MLSFTSVFSFFLHALLLKTAFS). Glu-213 (proton donor) is an active-site residue. A disulfide bridge links Cys-295 with Cys-406. Glu-312 (nucleophile) is an active-site residue.

This sequence belongs to the glycosyl hydrolase 5 (cellulase A) family.

It localises to the secreted. The enzyme catalyses Successive hydrolysis of beta-D-glucose units from the non-reducing ends of (1-&gt;3)-beta-D-glucans, releasing alpha-glucose.. In terms of biological role, beta-glucanases participate in the metabolism of beta-glucan, the main structural component of the cell wall. It could also function biosynthetically as a transglycosylase. In Schizosaccharomyces pombe (strain 972 / ATCC 24843) (Fission yeast), this protein is Glucan 1,3-beta-glucosidase 1 (exg1).